The sequence spans 301 residues: NDP-polyphosphate phosphotransferase 3 (301 aa).

Residues 1-12 (MNRNGSTKDPRR) show a composition bias toward basic and acidic residues. The segment at 1-21 (MNRNGSTKDPRRMTGAATGEI) is disordered.

It belongs to the polyphosphate kinase 2 (PPK2) family. Class I subfamily. Mg(2+) is required as a cofactor.

It carries out the reaction [phosphate](n) + ATP = [phosphate](n+1) + ADP. The enzyme catalyses [phosphate](n) + CTP = [phosphate](n+1) + CDP. The catalysed reaction is [phosphate](n) + GTP = [phosphate](n+1) + GDP. It catalyses the reaction [phosphate](n) + UTP = [phosphate](n+1) + UDP. Functionally, uses inorganic polyphosphate (polyP) as a donor to convert NDP to NTP. PolyP hydrolysis is slightly faster with UDP, but it can also use ADP, GDP and CDP. This chain is NDP-polyphosphate phosphotransferase 3, found in Ruegeria pomeroyi (strain ATCC 700808 / DSM 15171 / DSS-3) (Silicibacter pomeroyi).